Here is a 336-residue protein sequence, read N- to C-terminus: DNA topoisomerase 1B (336 aa).

A Topo IB-type catalytic domain is found at 79–336 (EIHIQGAEKE…KSYRKDVLGE (258 aa)). Y294 serves as the catalytic O-(3'-phospho-DNA)-tyrosine intermediate.

Belongs to the type IB topoisomerase family. In terms of assembly, monomer.

Its subcellular location is the virion. The catalysed reaction is ATP-independent breakage of single-stranded DNA, followed by passage and rejoining.. Releases the supercoiling and torsional tension of DNA introduced during the DNA replication and transcription by transiently cleaving and rejoining one strand of the DNA duplex. Introduces a single-strand break via transesterification at a target site in duplex DNA. The scissile phosphodiester is attacked by the catalytic tyrosine of the enzyme, resulting in the formation of a DNA-(3'-phosphotyrosyl)-enzyme intermediate and the expulsion of a 5'-OH DNA strand. The free DNA strand then undergoes passage around the unbroken strand thus removing DNA supercoils. Finally, in the religation step, the DNA 5'-OH attacks the covalent intermediate to expel the active-site tyrosine and restore the DNA phosphodiester backbone. Cleaves DNA after CCCTT sequence. This Acanthamoeba polyphaga mimivirus (APMV) protein is DNA topoisomerase 1B (TOP1E).